A 113-amino-acid polypeptide reads, in one-letter code: Large ribosomal subunit protein eL31A (113 aa).

This sequence belongs to the eukaryotic ribosomal protein eL31 family. Component of the large ribosomal subunit (LSU). Mature yeast ribosomes consist of a small (40S) and a large (60S) subunit. The 40S small subunit contains 1 molecule of ribosomal RNA (18S rRNA) and 33 different proteins (encoded by 57 genes). The large 60S subunit contains 3 rRNA molecules (25S, 5.8S and 5S rRNA) and 46 different proteins (encoded by 81 genes).

The protein localises to the cytoplasm. Its function is as follows. Component of the ribosome, a large ribonucleoprotein complex responsible for the synthesis of proteins in the cell. The small ribosomal subunit (SSU) binds messenger RNAs (mRNAs) and translates the encoded message by selecting cognate aminoacyl-transfer RNA (tRNA) molecules. The large subunit (LSU) contains the ribosomal catalytic site termed the peptidyl transferase center (PTC), which catalyzes the formation of peptide bonds, thereby polymerizing the amino acids delivered by tRNAs into a polypeptide chain. The nascent polypeptides leave the ribosome through a tunnel in the LSU and interact with protein factors that function in enzymatic processing, targeting, and the membrane insertion of nascent chains at the exit of the ribosomal tunnel. In Saccharomyces cerevisiae (strain ATCC 204508 / S288c) (Baker's yeast), this protein is Large ribosomal subunit protein eL31A.